The chain runs to 127 residues: Large ribosomal subunit protein bL17 (127 aa).

It belongs to the bacterial ribosomal protein bL17 family. Part of the 50S ribosomal subunit. Contacts protein L32.

The protein is Large ribosomal subunit protein bL17 of Lacticaseibacillus casei (strain BL23) (Lactobacillus casei).